The primary structure comprises 469 residues: Glutamate--tRNA ligase (469 aa).

A 'HIGH' region motif is present at residues 11–21; it reads PSPTGFIHLGN. Residues 116-131 show a composition bias toward basic and acidic residues; sequence ASGEKPRYDGTWRPEP. The tract at residues 116–139 is disordered; the sequence is ASGEKPRYDGTWRPEPGKVLPTPP. The 'KMSKS' region signature appears at 243 to 247; sequence KMSKR. Lys-246 contacts ATP.

This sequence belongs to the class-I aminoacyl-tRNA synthetase family. Glutamate--tRNA ligase type 1 subfamily. In terms of assembly, monomer.

It is found in the cytoplasm. It catalyses the reaction tRNA(Glu) + L-glutamate + ATP = L-glutamyl-tRNA(Glu) + AMP + diphosphate. Catalyzes the attachment of glutamate to tRNA(Glu) in a two-step reaction: glutamate is first activated by ATP to form Glu-AMP and then transferred to the acceptor end of tRNA(Glu). The protein is Glutamate--tRNA ligase of Paraburkholderia phymatum (strain DSM 17167 / CIP 108236 / LMG 21445 / STM815) (Burkholderia phymatum).